Consider the following 187-residue polypeptide: Macro domain-containing protein MM_0177 (187 aa).

The Macro domain maps to 8–187 (VEEGIRMELN…SIKKALSKIL (180 aa)).

It belongs to the MacroD-type family.

In Methanosarcina mazei (strain ATCC BAA-159 / DSM 3647 / Goe1 / Go1 / JCM 11833 / OCM 88) (Methanosarcina frisia), this protein is Macro domain-containing protein MM_0177.